The following is a 194-amino-acid chain: Putative manganese efflux pump MntP (194 aa).

Helical transmembrane passes span 8 to 28, 36 to 56, 61 to 81, 109 to 129, 138 to 158, and 172 to 192; these read LLAI…GIIL, MLIM…LGWL, FSHL…AFLG, MAVA…FLGI, PAGI…IFGI, and LWGG…HLFF.

The protein belongs to the MntP (TC 9.B.29) family.

The protein localises to the cell inner membrane. Functionally, probably functions as a manganese efflux pump. The chain is Putative manganese efflux pump MntP from Bacteroides fragilis (strain ATCC 25285 / DSM 2151 / CCUG 4856 / JCM 11019 / LMG 10263 / NCTC 9343 / Onslow / VPI 2553 / EN-2).